A 78-amino-acid chain; its full sequence is Defensin-like protein 141 (78 aa).

Positions 1-24 (MTKSIISAFFIILILGMMVNEIEG) are cleaved as a signal peptide. 4 cysteine pairs are disulfide-bonded: Cys31-Cys76, Cys40-Cys59, Cys45-Cys70, and Cys49-Cys72.

The protein belongs to the DEFL family.

The protein localises to the secreted. This is Defensin-like protein 141 (LCR3) from Arabidopsis thaliana (Mouse-ear cress).